The primary structure comprises 379 residues: Alkanesulfonate monooxygenase (379 aa).

The protein belongs to the SsuD family.

It carries out the reaction an alkanesulfonate + FMNH2 + O2 = an aldehyde + FMN + sulfite + H2O + 2 H(+). Its function is as follows. Catalyzes the desulfonation of aliphatic sulfonates. In Sorangium cellulosum (strain So ce56) (Polyangium cellulosum (strain So ce56)), this protein is Alkanesulfonate monooxygenase.